Consider the following 358-residue polypeptide: 4-hydroxy-3-methylbut-2-en-1-yl diphosphate synthase (flavodoxin) (358 aa).

[4Fe-4S] cluster contacts are provided by C270, C273, C305, and E312.

It belongs to the IspG family. Requires [4Fe-4S] cluster as cofactor.

It carries out the reaction (2E)-4-hydroxy-3-methylbut-2-enyl diphosphate + oxidized [flavodoxin] + H2O + 2 H(+) = 2-C-methyl-D-erythritol 2,4-cyclic diphosphate + reduced [flavodoxin]. It participates in isoprenoid biosynthesis; isopentenyl diphosphate biosynthesis via DXP pathway; isopentenyl diphosphate from 1-deoxy-D-xylulose 5-phosphate: step 5/6. Converts 2C-methyl-D-erythritol 2,4-cyclodiphosphate (ME-2,4cPP) into 1-hydroxy-2-methyl-2-(E)-butenyl 4-diphosphate. This chain is 4-hydroxy-3-methylbut-2-en-1-yl diphosphate synthase (flavodoxin), found in Vesicomyosocius okutanii subsp. Calyptogena okutanii (strain HA).